Reading from the N-terminus, the 165-residue chain is Crossover junction endodeoxyribonuclease RuvC (165 aa).

Catalysis depends on residues Asp-7, Glu-67, and Asp-140. The Mg(2+) site is built by Asp-7, Glu-67, and Asp-140.

Belongs to the RuvC family. In terms of assembly, homodimer which binds Holliday junction (HJ) DNA. The HJ becomes 2-fold symmetrical on binding to RuvC with unstacked arms; it has a different conformation from HJ DNA in complex with RuvA. In the full resolvosome a probable DNA-RuvA(4)-RuvB(12)-RuvC(2) complex forms which resolves the HJ. Mg(2+) serves as cofactor.

The protein resides in the cytoplasm. It carries out the reaction Endonucleolytic cleavage at a junction such as a reciprocal single-stranded crossover between two homologous DNA duplexes (Holliday junction).. The RuvA-RuvB-RuvC complex processes Holliday junction (HJ) DNA during genetic recombination and DNA repair. Endonuclease that resolves HJ intermediates. Cleaves cruciform DNA by making single-stranded nicks across the HJ at symmetrical positions within the homologous arms, yielding a 5'-phosphate and a 3'-hydroxyl group; requires a central core of homology in the junction. The consensus cleavage sequence is 5'-(A/T)TT(C/G)-3'. Cleavage occurs on the 3'-side of the TT dinucleotide at the point of strand exchange. HJ branch migration catalyzed by RuvA-RuvB allows RuvC to scan DNA until it finds its consensus sequence, where it cleaves and resolves the cruciform DNA. The sequence is that of Crossover junction endodeoxyribonuclease RuvC from Caldanaerobacter subterraneus subsp. tengcongensis (strain DSM 15242 / JCM 11007 / NBRC 100824 / MB4) (Thermoanaerobacter tengcongensis).